A 525-amino-acid chain; its full sequence is 2,3-bisphosphoglycerate-independent phosphoglycerate mutase (525 aa).

Residues Asp-15 and Ser-65 each contribute to the Mn(2+) site. Ser-65 (phosphoserine intermediate) is an active-site residue. Residues His-126, 156 to 157 (RD), Arg-188, Arg-194, 258 to 261 (RPDR), and Lys-331 contribute to the substrate site. Mn(2+) is bound by residues Asp-398, His-402, Asp-439, His-440, and His-457.

The protein belongs to the BPG-independent phosphoglycerate mutase family. In terms of assembly, monomer. Mn(2+) is required as a cofactor.

It carries out the reaction (2R)-2-phosphoglycerate = (2R)-3-phosphoglycerate. Its pathway is carbohydrate degradation; glycolysis; pyruvate from D-glyceraldehyde 3-phosphate: step 3/5. In terms of biological role, catalyzes the interconversion of 2-phosphoglycerate and 3-phosphoglycerate. The chain is 2,3-bisphosphoglycerate-independent phosphoglycerate mutase from Picosynechococcus sp. (strain ATCC 27264 / PCC 7002 / PR-6) (Agmenellum quadruplicatum).